The sequence spans 728 residues: MDKETIKAHKISDEEYTQILEILGREPNLLELGVISAMWSEHCSYKSSKKYLNGFPTKAPWVIQGPGENAGVIDIGQGMSAVFKVESHNHPSFIEPFAGAATGVGGILRDVFTMGARVVAGLNSLKFGDIHNEKCGKHQKYLVKGVVNGISHYGNCMGVPTIGGECAFDECFNGNILVNAFALGICKSEDIFYAKAEGVGNPVIYVGSKTGRDGLGGAVMASDSFNEESKSLRPTVQIGDPFSEKLLMEACLELFKTDYIVGIQDMGAAGLTSSSFEMAGRSGSGMKLYLDKTPMRESGMTPYELMLSESQERMLICAKKGYEDKVIEIFKKWDLDAVVIGEVTNTEKMELFWHDELVGLIPIEPLSEKAPILNRPISEPKYLSEIKDYKFELKSSIQELFIQMLQNENINNKAFIYDQFDSSVQTNTIKADGKLGASVIRIKENGVSVAMAIECNSRLNYVNPKIGAALAVASAGRKVACTGAKPLAISDCLNYGNPQNPEVMWQFAQGCEGIKEACKELNTPVVSGNVSLYNETEGVSIYPSPTIVSVGVLEDANKTLKASFEKENLSVYLLGESLGEFGGSMVMKIQDKKVSGSLKELDYKAELALWDLLYKANQNSLLECANSVGIGGIAMTLAKMFAISSVGANLTSGFDDEKMIFDESASRAIVGLSKENEETFLTLTKEFGVKAYKLGVSTSQKHFKLDSIELNKAELDKLYFESFQEQIQ.

Histidine 42 is a catalytic residue. The ATP site is built by tyrosine 45 and lysine 84. Glutamate 86 contributes to the Mg(2+) binding site. Substrate contacts are provided by residues 87 to 90 and arginine 109; that span reads SHNH. Residue histidine 88 is the Proton acceptor of the active site. Aspartate 110 serves as a coordination point for Mg(2+). Residue glutamine 237 coordinates substrate. Residue aspartate 265 coordinates Mg(2+). Residue 309-311 coordinates substrate; the sequence is ESQ. ATP-binding residues include aspartate 491 and glycine 528. Asparagine 529 contributes to the Mg(2+) binding site. Serine 531 contacts substrate.

Belongs to the FGAMS family. Monomer. Part of the FGAM synthase complex composed of 1 PurL, 1 PurQ and 2 PurS subunits.

The protein resides in the cytoplasm. The enzyme catalyses N(2)-formyl-N(1)-(5-phospho-beta-D-ribosyl)glycinamide + L-glutamine + ATP + H2O = 2-formamido-N(1)-(5-O-phospho-beta-D-ribosyl)acetamidine + L-glutamate + ADP + phosphate + H(+). Its pathway is purine metabolism; IMP biosynthesis via de novo pathway; 5-amino-1-(5-phospho-D-ribosyl)imidazole from N(2)-formyl-N(1)-(5-phospho-D-ribosyl)glycinamide: step 1/2. Its function is as follows. Part of the phosphoribosylformylglycinamidine synthase complex involved in the purines biosynthetic pathway. Catalyzes the ATP-dependent conversion of formylglycinamide ribonucleotide (FGAR) and glutamine to yield formylglycinamidine ribonucleotide (FGAM) and glutamate. The FGAM synthase complex is composed of three subunits. PurQ produces an ammonia molecule by converting glutamine to glutamate. PurL transfers the ammonia molecule to FGAR to form FGAM in an ATP-dependent manner. PurS interacts with PurQ and PurL and is thought to assist in the transfer of the ammonia molecule from PurQ to PurL. The sequence is that of Phosphoribosylformylglycinamidine synthase subunit PurL from Campylobacter jejuni subsp. doylei (strain ATCC BAA-1458 / RM4099 / 269.97).